The following is a 107-amino-acid chain: Pyrimidine/purine nucleoside phosphorylase (107 aa).

The protein belongs to the nucleoside phosphorylase PpnP family.

It catalyses the reaction a purine D-ribonucleoside + phosphate = a purine nucleobase + alpha-D-ribose 1-phosphate. The enzyme catalyses adenosine + phosphate = alpha-D-ribose 1-phosphate + adenine. It carries out the reaction cytidine + phosphate = cytosine + alpha-D-ribose 1-phosphate. The catalysed reaction is guanosine + phosphate = alpha-D-ribose 1-phosphate + guanine. It catalyses the reaction inosine + phosphate = alpha-D-ribose 1-phosphate + hypoxanthine. The enzyme catalyses thymidine + phosphate = 2-deoxy-alpha-D-ribose 1-phosphate + thymine. It carries out the reaction uridine + phosphate = alpha-D-ribose 1-phosphate + uracil. The catalysed reaction is xanthosine + phosphate = alpha-D-ribose 1-phosphate + xanthine. Catalyzes the phosphorolysis of diverse nucleosides, yielding D-ribose 1-phosphate and the respective free bases. Can use uridine, adenosine, guanosine, cytidine, thymidine, inosine and xanthosine as substrates. Also catalyzes the reverse reactions. In Azoarcus sp. (strain BH72), this protein is Pyrimidine/purine nucleoside phosphorylase.